Consider the following 218-residue polypeptide: MKFFIDTANLDQIREAHDLGVLDGVTTNPSLMAKEGIKGVENQRRHYVEICNIVQGDVSAEVIATDYEGMVREGKELAALNPHIVVKVPCIADGIKAIKHFSGKGIRTNCTLVFSTGQALLAAKAGATYVSPFVGRLDDICEDGVGLVADIVRMYRFYNYPTQVLAASIRSSKHIMECVEAGADVATCPLSAIKGLMNHPLTDAGLKKFLEDYKKVNE.

Lysine 87 functions as the Schiff-base intermediate with substrate in the catalytic mechanism.

It belongs to the transaldolase family. Type 3B subfamily.

The protein localises to the cytoplasm. It catalyses the reaction D-sedoheptulose 7-phosphate + D-glyceraldehyde 3-phosphate = D-erythrose 4-phosphate + beta-D-fructose 6-phosphate. It participates in carbohydrate degradation; pentose phosphate pathway; D-glyceraldehyde 3-phosphate and beta-D-fructose 6-phosphate from D-ribose 5-phosphate and D-xylulose 5-phosphate (non-oxidative stage): step 2/3. In terms of biological role, transaldolase is important for the balance of metabolites in the pentose-phosphate pathway. The chain is Probable transaldolase from Bacteroides fragilis (strain YCH46).